The sequence spans 368 residues: 3-dehydroquinate synthase (368 aa).

NAD(+)-binding positions include 69-74, 103-107, 127-128, Lys-140, and Lys-149; these read DGEAYK, GVIGD, and TT. 3 residues coordinate Zn(2+): Glu-182, His-245, and His-262.

The protein belongs to the sugar phosphate cyclases superfamily. Dehydroquinate synthase family. It depends on Co(2+) as a cofactor. The cofactor is Zn(2+). NAD(+) serves as cofactor.

The protein localises to the cytoplasm. It catalyses the reaction 7-phospho-2-dehydro-3-deoxy-D-arabino-heptonate = 3-dehydroquinate + phosphate. It functions in the pathway metabolic intermediate biosynthesis; chorismate biosynthesis; chorismate from D-erythrose 4-phosphate and phosphoenolpyruvate: step 2/7. Catalyzes the conversion of 3-deoxy-D-arabino-heptulosonate 7-phosphate (DAHP) to dehydroquinate (DHQ). The protein is 3-dehydroquinate synthase of Pseudomonas aeruginosa (strain LESB58).